We begin with the raw amino-acid sequence, 205 residues long: High frequency lysogenization protein HflD homolog (205 aa).

Belongs to the HflD family.

Its subcellular location is the cytoplasm. The protein resides in the cell inner membrane. In Shewanella sp. (strain MR-7), this protein is High frequency lysogenization protein HflD homolog.